Here is a 551-residue protein sequence, read N- to C-terminus: Methyl-accepting chemotaxis protein I (551 aa).

Residues 1 to 6 lie on the Cytoplasmic side of the membrane; sequence MLKRIK. Residues 7-30 traverse the membrane as a helical segment; it reads IVTSLLLVLAVFGLLQLTSGGLFF. Over 31–190 the chain is Periplasmic; it reads NALKNDKENF…AVSDNNASYS (160 aa). Residues 64-73 form a the 3 Arg may form a positively charged pocket, which binds the alpha-carboxyl group of the attractant AA region; sequence RNTLNRAGIR. A helical membrane pass occupies residues 191–210; the sequence is QAMWILVGVMIVVLAVIFAV. Topologically, residues 211-551 are cytoplasmic; it reads WFGIKASLVA…ADSEENWETF (341 aa). One can recognise an HAMP domain in the interval 216 to 268; the sequence is ASLVAPMNRLIDSIRHIAGGDLVKPIEVDGSNEMGQLAESLRHMQGELMRTVG. Positions 273–502 constitute a Methyl-accepting transducer domain; sequence GANAIYSGAS…ESAAAAAALE (230 aa). At Gln-297 the chain carries Glutamate methyl ester (Gln). Glu-304 is subject to Glutamate methyl ester (Glu). Glutamate methyl ester (Gln) is present on Gln-311. Glutamate methyl ester (Glu) is present on residues Glu-493 and Glu-502.

The protein belongs to the methyl-accepting chemotaxis (MCP) protein family.

It is found in the cell inner membrane. Functionally, receptor for the attractant L-serine and related amino acids. Is also responsible for chemotaxis away from a wide range of repellents, including leucine, indole, and weak acids. In terms of biological role, chemotactic-signal transducers respond to changes in the concentration of attractants and repellents in the environment, transduce a signal from the outside to the inside of the cell, and facilitate sensory adaptation through the variation of the level of methylation. Attractants increase the level of methylation while repellents decrease the level of methylation, the methyl groups are added by the methyltransferase CheR and removed by the methylesterase CheB. The polypeptide is Methyl-accepting chemotaxis protein I (tsr) (Escherichia coli (strain K12)).